We begin with the raw amino-acid sequence, 185 residues long: Threonylcarbamoyl-AMP synthase (185 aa).

The 183-residue stretch at 3-185 (EQAPAEVKQV…IDAISGKILR (183 aa)) folds into the YrdC-like domain.

The protein belongs to the SUA5 family. TsaC subfamily.

Its subcellular location is the cytoplasm. The catalysed reaction is L-threonine + hydrogencarbonate + ATP = L-threonylcarbamoyladenylate + diphosphate + H2O. In terms of biological role, required for the formation of a threonylcarbamoyl group on adenosine at position 37 (t(6)A37) in tRNAs that read codons beginning with adenine. Catalyzes the conversion of L-threonine, HCO(3)(-)/CO(2) and ATP to give threonylcarbamoyl-AMP (TC-AMP) as the acyladenylate intermediate, with the release of diphosphate. In Shewanella woodyi (strain ATCC 51908 / MS32), this protein is Threonylcarbamoyl-AMP synthase.